The sequence spans 168 residues: Alkyl hydroperoxide reductase C (168 aa).

A Thioredoxin domain is found at 1–138 (EFIEVSEESF…LVNKIKAAQY (138 aa)). The Cysteine sulfenic acid (-SOH) intermediate role is filled by cysteine 28.

Belongs to the peroxiredoxin family. AhpC/Prx1 subfamily. In terms of assembly, homodimer; disulfide-linked, upon oxidation. 5 homodimers assemble to form a ring-like decamer.

The protein resides in the cytoplasm. It carries out the reaction a hydroperoxide + NADH + H(+) = an alcohol + NAD(+) + H2O. Thiol-specific peroxidase that catalyzes the reduction of hydrogen peroxide and organic hydroperoxides to water and alcohols, respectively. Plays a role in cell protection against oxidative stress by detoxifying peroxides. In Ferdinandcohnia aciditolerans (strain JCM 32973 / CCTCC AB 2017280 / YN-1) (Bacillus aciditolerans), this protein is Alkyl hydroperoxide reductase C.